The following is a 107-amino-acid chain: uncharacterized protein (107 aa).

The signal sequence occupies residues 1–18; that stretch reads MRTLMLIILSILIYLSSA.

This is an uncharacterized protein from Caenorhabditis elegans.